Reading from the N-terminus, the 177-residue chain is Nucleoside triphosphate/diphosphate phosphatase (177 aa).

Residue arginine 23 is the Proton donor of the active site. The Mg(2+) site is built by asparagine 87, aspartate 103, aspartate 105, aspartate 107, aspartate 120, and glutamate 123.

It belongs to the Ntdp family. The cofactor is Mg(2+).

The enzyme catalyses a ribonucleoside 5'-triphosphate + H2O = a ribonucleoside 5'-diphosphate + phosphate + H(+). It catalyses the reaction a ribonucleoside 5'-diphosphate + H2O = a ribonucleoside 5'-phosphate + phosphate + H(+). Has nucleoside phosphatase activity towards nucleoside triphosphates and nucleoside diphosphates. The sequence is that of Nucleoside triphosphate/diphosphate phosphatase from Streptococcus sanguinis (strain SK36).